The primary structure comprises 331 residues: Biotin synthase (331 aa).

Residues 46-275 (YYGKKVKLNM…TKEIRISGGR (230 aa)) form the Radical SAM core domain. The [4Fe-4S] cluster site is built by Cys-64, Cys-68, and Cys-71. [2Fe-2S] cluster-binding residues include Cys-108, Cys-140, Cys-200, and Arg-270.

Belongs to the radical SAM superfamily. Biotin synthase family. In terms of assembly, homodimer. It depends on [4Fe-4S] cluster as a cofactor. Requires [2Fe-2S] cluster as cofactor.

The catalysed reaction is (4R,5S)-dethiobiotin + (sulfur carrier)-SH + 2 reduced [2Fe-2S]-[ferredoxin] + 2 S-adenosyl-L-methionine = (sulfur carrier)-H + biotin + 2 5'-deoxyadenosine + 2 L-methionine + 2 oxidized [2Fe-2S]-[ferredoxin]. It functions in the pathway cofactor biosynthesis; biotin biosynthesis; biotin from 7,8-diaminononanoate: step 2/2. Catalyzes the conversion of dethiobiotin (DTB) to biotin by the insertion of a sulfur atom into dethiobiotin via a radical-based mechanism. The protein is Biotin synthase of Lysinibacillus sphaericus (strain C3-41).